The following is a 314-amino-acid chain: GDSL-like esterase Rv1075c (314 aa).

The first 21 residues, 1–21 (MPRRSTIALATAGALASTGTA), serve as a signal peptide directing secretion. Ser80 functions as the Nucleophile in the catalytic mechanism. The active-site Proton donor is Asp244. His247 acts as the Proton acceptor in catalysis. Residues 276 to 314 (IHETPSRPGTATLEPGHTRHSMMSRLRRPRPARAVPTGG) are disordered. Over residues 293 to 306 (TRHSMMSRLRRPRP) the composition is skewed to basic residues.

It belongs to the 'GDSL' lipolytic enzyme family.

It catalyses the reaction an acetyl ester + H2O = an aliphatic alcohol + acetate + H(+). It carries out the reaction a butanoate ester + H2O = an aliphatic alcohol + butanoate + H(+). The enzyme catalyses triacetin + H2O = diacetylglycerol + acetate + H(+). The catalysed reaction is 1,2,3-tributanoylglycerol + H2O = dibutanoylglycerol + butanoate + H(+). With respect to regulation, esterase activity is significantly inhibited by the serine modifier phenylmethylsulfonyl fluoride (PMSF). Completely inhibited by diethyl pyrocarbonate. Esterase that preferentially hydrolyzes short-chain fatty acids, particularly pNP-acetate (C2) and pNP-butyrate (C4). Also has weak activity with pNP-hexanoate (C6) and pNP-octanoate (C8). It can also hydrolyze short-chain tryglycerides such as triacetin and tributyrin. Important for intracellular survival. This Mycobacterium tuberculosis (strain ATCC 25618 / H37Rv) protein is GDSL-like esterase Rv1075c.